The following is a 229-amino-acid chain: Potassium/proton antiporter CemA (229 aa).

Helical transmembrane passes span 7–27 (FTPL…SLSL), 114–134 (IICF…LLIL), 154–174 (ILLL…ELMI), and 189–209 (IISG…KYWI).

The protein belongs to the CemA family.

It is found in the plastid. The protein localises to the chloroplast inner membrane. It catalyses the reaction K(+)(in) + H(+)(out) = K(+)(out) + H(+)(in). Contributes to K(+)/H(+) antiport activity by supporting proton efflux to control proton extrusion and homeostasis in chloroplasts in a light-dependent manner to modulate photosynthesis. Prevents excessive induction of non-photochemical quenching (NPQ) under continuous-light conditions. Indirectly promotes efficient inorganic carbon uptake into chloroplasts. The sequence is that of Potassium/proton antiporter CemA from Vitis vinifera (Grape).